The sequence spans 544 residues: Secreted aspartic protease 9 (544 aa).

The N-terminal stretch at 1–17 is a signal peptide; that stretch reads MRLNSVALLSLVATALA. The disordered stretch occupies residues 31–50; the sequence is GESKDDLSPEDDSNPRFVKR. Residues 65-479 enclose the Peptidase A1 domain; it reads YMATLKIGSN…DLDDYEVSLA (415 aa). D83 is an active-site residue. Residue 83–85 coordinates pepstatin A; the sequence is DTG. C98 and C195 form a disulfide bridge. N212, N240, and N252 each carry an N-linked (GlcNAc...) asparagine glycan. The active site involves D371. 371-375 provides a ligand contact to pepstatin A; the sequence is DTGST. A disulfide bond links C406 and C441. N-linked (GlcNAc...) asparagine glycans are attached at residues N422 and N499. The disordered stretch occupies residues 500 to 519; sequence SSGSGTTSSSGTSTSTSTRH. S520 carries GPI-anchor amidated serine lipidation. The propeptide at 521-544 is removed in mature form; that stretch reads AGSIISKPVYGLLLSLLISCYVLV. A helical transmembrane segment spans residues 524 to 544; the sequence is IISKPVYGLLLSLLISCYVLV.

Belongs to the peptidase A1 family. As to quaternary structure, monomer. In terms of processing, the GPI-anchor is attached to the protein in the endoplasmic reticulum and serves to target the protein to the cell surface. There, the glucosamine-inositol phospholipid moiety is cleaved off and the GPI-modified mannoprotein is covalently attached via its lipidless GPI glycan remnant to the 1,6-beta-glucan of the outer cell wall layer.

The protein resides in the cell membrane. It localises to the secreted. Its subcellular location is the cell wall. The enzyme catalyses Preferential cleavage at the carboxyl of hydrophobic amino acids, but fails to cleave 15-Leu-|-Tyr-16, 16-Tyr-|-Leu-17 and 24-Phe-|-Phe-25 of insulin B chain. Activates trypsinogen, and degrades keratin.. Its function is as follows. Secreted aspartic peptidases (SAPs) are a group of ten acidic hydrolases considered as key virulence factors. These enzymes supply the fungus with nutrient amino acids as well as are able to degrade the selected host's proteins involved in the immune defense. Moreover, acts toward human hemoglobin though limited proteolysis to generate a variety of antimicrobial hemocidins, enabling to compete with the other microorganisms of the same physiological niche using the microbicidal peptides generated from the host protein. Functionally, plays a key role in defense against host by cleaving histatin-5 (Hst 5), a peptide from human saliva that carries out fungicidal activity. The cleavage rate decreases in an order of SAP2 &gt; SAP9 &gt; SAP3 &gt; SAP7 &gt; SAP4 &gt; SAP1 &gt; SAP8. The first cleavage occurs between residues 'Lys-17' and 'His-18' of Hst 5, giving DSHAKRHHGYKRKFHEK and HHSHRGY peptides. Simultaneously, the DSHAKRHHGYKRK peptide is also formed. Further fragmentation by SAP9 results in FHEK product. The protein is Secreted aspartic protease 9 of Candida albicans (strain SC5314 / ATCC MYA-2876) (Yeast).